The sequence spans 353 residues: Photosystem II D2 protein (353 aa).

Thr2 carries the post-translational modification N-acetylthreonine. A Phosphothreonine modification is found at Thr2. Residues 41–61 traverse the membrane as a helical segment; it reads CAYFALGGWFTGTTFVTSWYT. Chlorophyll a is bound at residue His118. Residues 125–141 traverse the membrane as a helical segment; sequence GFMLRQFELARSVQLRP. Gln130 and Asn143 together coordinate pheophytin a. Residues 153–166 traverse the membrane as a helical segment; it reads VFISVFFIYPLGQS. His198 serves as a coordination point for chlorophyll a. The chain crosses the membrane as a helical span at residues 208–228; that stretch reads AALLCAIHGATVENTLFEDGD. A plastoquinone contacts are provided by His215 and Phe262. His215 is a binding site for Fe cation. His269 lines the Fe cation pocket. A helical transmembrane segment spans residues 279–295; that stretch reads GLWMSALGVVGLALNLR.

It belongs to the reaction center PufL/M/PsbA/D family. As to quaternary structure, PSII is composed of 1 copy each of membrane proteins PsbA, PsbB, PsbC, PsbD, PsbE, PsbF, PsbH, PsbI, PsbJ, PsbK, PsbL, PsbM, PsbT, PsbX, PsbY, PsbZ, Psb30/Ycf12, at least 3 peripheral proteins of the oxygen-evolving complex and a large number of cofactors. It forms dimeric complexes. The D1/D2 heterodimer binds P680, chlorophylls that are the primary electron donor of PSII, and subsequent electron acceptors. It shares a non-heme iron and each subunit binds pheophytin, quinone, additional chlorophylls, carotenoids and lipids. There is also a Cl(-1) ion associated with D1 and D2, which is required for oxygen evolution. The PSII complex binds additional chlorophylls, carotenoids and specific lipids. serves as cofactor.

The protein resides in the plastid membrane. It catalyses the reaction 2 a plastoquinone + 4 hnu + 2 H2O = 2 a plastoquinol + O2. Its function is as follows. Photosystem II (PSII) is a light-driven water:plastoquinone oxidoreductase that uses light energy to abstract electrons from H(2)O, generating O(2) and a proton gradient subsequently used for ATP formation. It consists of a core antenna complex that captures photons, and an electron transfer chain that converts photonic excitation into a charge separation. The D1/D2 (PsbA/PsbD) reaction center heterodimer binds P680, the primary electron donor of PSII as well as several subsequent electron acceptors. D2 is needed for assembly of a stable PSII complex. This is Photosystem II D2 protein from Cuscuta reflexa (Southern Asian dodder).